The sequence spans 346 residues: Putative glycosyltransferase HI_0523 (346 aa).

This sequence belongs to the glycosyltransferase 9 family.

The chain is Putative glycosyltransferase HI_0523 from Haemophilus influenzae (strain ATCC 51907 / DSM 11121 / KW20 / Rd).